The sequence spans 388 residues: S-adenosylmethionine synthase (388 aa).

Histidine 16 lines the ATP pocket. Aspartate 18 contacts Mg(2+). Residue glutamate 44 coordinates K(+). 2 residues coordinate L-methionine: glutamate 57 and glutamine 100. The segment at 100–110 is flexible loop; the sequence is QSPEIAQGVDR. ATP-binding positions include 165-167, 231-232, aspartate 240, 246-247, alanine 263, and lysine 267; these read DAK, KF, and RK. L-methionine is bound at residue aspartate 240. Lysine 271 contacts L-methionine.

Belongs to the AdoMet synthase family. In terms of assembly, homotetramer; dimer of dimers. Requires Mg(2+) as cofactor. The cofactor is K(+).

It localises to the cytoplasm. It carries out the reaction L-methionine + ATP + H2O = S-adenosyl-L-methionine + phosphate + diphosphate. It functions in the pathway amino-acid biosynthesis; S-adenosyl-L-methionine biosynthesis; S-adenosyl-L-methionine from L-methionine: step 1/1. In terms of biological role, catalyzes the formation of S-adenosylmethionine (AdoMet) from methionine and ATP. The overall synthetic reaction is composed of two sequential steps, AdoMet formation and the subsequent tripolyphosphate hydrolysis which occurs prior to release of AdoMet from the enzyme. The sequence is that of S-adenosylmethionine synthase from Psychrobacter sp. (strain PRwf-1).